A 185-amino-acid polypeptide reads, in one-letter code: Crossover junction endodeoxyribonuclease RuvC (185 aa).

Residues aspartate 7, glutamate 66, and aspartate 137 contribute to the active site. Mg(2+)-binding residues include aspartate 7, glutamate 66, and aspartate 137.

The protein belongs to the RuvC family. Homodimer which binds Holliday junction (HJ) DNA. The HJ becomes 2-fold symmetrical on binding to RuvC with unstacked arms; it has a different conformation from HJ DNA in complex with RuvA. In the full resolvosome a probable DNA-RuvA(4)-RuvB(12)-RuvC(2) complex forms which resolves the HJ. Requires Mg(2+) as cofactor.

The protein localises to the cytoplasm. The enzyme catalyses Endonucleolytic cleavage at a junction such as a reciprocal single-stranded crossover between two homologous DNA duplexes (Holliday junction).. Functionally, the RuvA-RuvB-RuvC complex processes Holliday junction (HJ) DNA during genetic recombination and DNA repair. Endonuclease that resolves HJ intermediates. Cleaves cruciform DNA by making single-stranded nicks across the HJ at symmetrical positions within the homologous arms, yielding a 5'-phosphate and a 3'-hydroxyl group; requires a central core of homology in the junction. The consensus cleavage sequence is 5'-(A/T)TT(C/G)-3'. Cleavage occurs on the 3'-side of the TT dinucleotide at the point of strand exchange. HJ branch migration catalyzed by RuvA-RuvB allows RuvC to scan DNA until it finds its consensus sequence, where it cleaves and resolves the cruciform DNA. The protein is Crossover junction endodeoxyribonuclease RuvC of Anaeromyxobacter sp. (strain K).